A 61-amino-acid polypeptide reads, in one-letter code: Alpha-conotoxin PnIB (61 aa).

Residues 1–21 form the signal peptide; it reads MGMRMMFTVFLLVVLATTVVS. The propeptide occupies 22-44; the sequence is FTSDRASDDGNAAASDLIALTIK. 2 disulfide bridges follow: Cys-46–Cys-52 and Cys-47–Cys-60. Residues 48 to 50 are ser-Xaa-Pro motif, crucial for potent interaction with nAChR; that stretch reads SLP. Position 59 is a sulfotyrosine (Tyr-59). Cysteine amide is present on Cys-60.

The protein belongs to the conotoxin A superfamily. As to expression, expressed by the venom duct.

The protein resides in the secreted. In terms of biological role, alpha-conotoxins act on postsynaptic membranes, they bind to the nicotinic acetylcholine receptors (nAChR) and thus inhibit them. This toxin blocks mammalian nAChRs (alpha-7/CHRNA7 &gt; alpha-3-beta-2/CHRNA3-CHRNB2). This chain is Alpha-conotoxin PnIB, found in Conus pennaceus (Feathered cone).